A 22-amino-acid polypeptide reads, in one-letter code: Cysteine-rich venom protein notescatin (22 aa).

Basic and acidic residues predominate over residues 1-15 (SNKKDYQKEIVDKHN). A disordered region spans residues 1–22 (SNKKDYQKEIVDKHNALRRSVK).

The protein belongs to the CRISP family. In terms of processing, contains 8 disulfide bonds. In terms of tissue distribution, expressed by the venom gland.

It is found in the secreted. The sequence is that of Cysteine-rich venom protein notescatin from Notechis scutatus scutatus (Mainland tiger snake).